The primary structure comprises 644 residues: Exoribonuclease 2 (644 aa).

Positions 189–516 (REDLTALNFV…NHRLLKAMIT (328 aa)) constitute an RNB domain. The 83-residue stretch at 561–643 (DTRFTAEIID…ETRNVIARPV (83 aa)) folds into the S1 motif domain.

Belongs to the RNR ribonuclease family. RNase II subfamily.

The protein localises to the cytoplasm. It carries out the reaction Exonucleolytic cleavage in the 3'- to 5'-direction to yield nucleoside 5'-phosphates.. Functionally, involved in mRNA degradation. Hydrolyzes single-stranded polyribonucleotides processively in the 3' to 5' direction. The sequence is that of Exoribonuclease 2 from Yersinia pestis bv. Antiqua (strain Antiqua).